Here is a 468-residue protein sequence, read N- to C-terminus: Serine/threonine-protein phosphatase 2A 55 kDa regulatory subunit B beta isoform (468 aa).

7 WD repeats span residues 47–86 (SSAD…KNQP), 112–153 (EIEE…KRPE), 196–234 (AHTY…RSFN), 245–285 (ELTE…LCDK), 304–342 (EIIS…RPIE), 359–400 (ENDC…DVTL), and 435–468 (DFSK…DKVN).

Belongs to the phosphatase 2A regulatory subunit B family. As to quaternary structure, PP2A consists of a common heterodimeric core enzyme, composed of a 36 kDa catalytic subunit (subunit C) and a 65 kDa constant regulatory subunit (PR65 or subunit A), that associates with a variety of regulatory subunits.

It is found in the cytoplasm. The protein localises to the cytoskeleton. It localises to the membrane. In terms of biological role, the B regulatory subunit might modulate substrate selectivity and catalytic activity, and might also direct the localization of the catalytic enzyme to a particular subcellular compartment. Negatively controls the initiation of oocyte maturation. The polypeptide is Serine/threonine-protein phosphatase 2A 55 kDa regulatory subunit B beta isoform (ppp2r2b) (Xenopus laevis (African clawed frog)).